The sequence spans 69 residues: Cytochrome c oxidase subunit 8A, mitochondrial (69 aa).

The transit peptide at 1-25 (MYVVTPLLLRGLTGSARRLPVPRAQ) directs the protein to the mitochondrion. An SIFI-degron motif is present at residues 2 to 19 (YVVTPLLLRGLTGSARRL). Over 26–36 (VHSMPPEQKLG) the chain is Mitochondrial matrix. A helical membrane pass occupies residues 37–60 (VLELAIGFTSCMVTFLLPAGWIMS). Residues 61 to 69 (HLESYKKRG) are Mitochondrial intermembrane-facing.

The protein belongs to the cytochrome c oxidase VIII family. In terms of assembly, component of the cytochrome c oxidase (complex IV, CIV), a multisubunit enzyme composed of 14 subunits. The complex is composed of a catalytic core of 3 subunits MT-CO1, MT-CO2 and MT-CO3, encoded in the mitochondrial DNA, and 11 supernumerary subunits COX4I, COX5A, COX5B, COX6A, COX6B, COX6C, COX7A, COX7B, COX7C, COX8 and NDUFA4, which are encoded in the nuclear genome. The complex exists as a monomer or a dimer and forms supercomplexes (SCs) in the inner mitochondrial membrane with NADH-ubiquinone oxidoreductase (complex I, CI) and ubiquinol-cytochrome c oxidoreductase (cytochrome b-c1 complex, complex III, CIII), resulting in different assemblies (supercomplex SCI(1)III(2)IV(1) and megacomplex MCI(2)III(2)IV(2)). In terms of processing, in response to mitochondrial stress, the precursor protein is ubiquitinated by the SIFI complex in the cytoplasm before mitochondrial import, leading to its degradation. Within the SIFI complex, UBR4 initiates ubiquitin chain that are further elongated or branched by KCMF1.

It is found in the mitochondrion inner membrane. It functions in the pathway energy metabolism; oxidative phosphorylation. Functionally, component of the cytochrome c oxidase, the last enzyme in the mitochondrial electron transport chain which drives oxidative phosphorylation. The respiratory chain contains 3 multisubunit complexes succinate dehydrogenase (complex II, CII), ubiquinol-cytochrome c oxidoreductase (cytochrome b-c1 complex, complex III, CIII) and cytochrome c oxidase (complex IV, CIV), that cooperate to transfer electrons derived from NADH and succinate to molecular oxygen, creating an electrochemical gradient over the inner membrane that drives transmembrane transport and the ATP synthase. Cytochrome c oxidase is the component of the respiratory chain that catalyzes the reduction of oxygen to water. Electrons originating from reduced cytochrome c in the intermembrane space (IMS) are transferred via the dinuclear copper A center (CU(A)) of subunit 2 and heme A of subunit 1 to the active site in subunit 1, a binuclear center (BNC) formed by heme A3 and copper B (CU(B)). The BNC reduces molecular oxygen to 2 water molecules using 4 electrons from cytochrome c in the IMS and 4 protons from the mitochondrial matrix. This Ateles belzebuth (White-bellied spider monkey) protein is Cytochrome c oxidase subunit 8A, mitochondrial (COX8A).